The sequence spans 344 residues: Methionine import ATP-binding protein MetN (344 aa).

Positions 2-241 (IEINRVNKVF…PKTELARKFI (240 aa)) constitute an ABC transporter domain. 38-45 (GSSGAGKS) lines the ATP pocket.

Belongs to the ABC transporter superfamily. Methionine importer (TC 3.A.1.24) family. In terms of assembly, the complex is composed of two ATP-binding proteins (MetN), two transmembrane proteins (MetI) and a solute-binding protein (MetQ).

It is found in the cell inner membrane. The catalysed reaction is L-methionine(out) + ATP + H2O = L-methionine(in) + ADP + phosphate + H(+). It catalyses the reaction D-methionine(out) + ATP + H2O = D-methionine(in) + ADP + phosphate + H(+). Functionally, part of the ABC transporter complex MetNIQ involved in methionine import. Responsible for energy coupling to the transport system. This Photobacterium profundum (strain SS9) protein is Methionine import ATP-binding protein MetN.